The chain runs to 504 residues: MAPKTGETVVEKMEVDEAKQDVPATEPAKDLNAIAVENIKEQLAALDKGEEHLITRVLQVLPKTRKQINDNVLYKLVSSHLSSDAQFAEGMLKYLHYTPAADTEVQPMDTSNVKTKSPKKGVKPVFASPESDCYLRLLVLLHLYAQKKNTEALALGENQLTSIYNFDRRTLDGLAAKTLYFLCVIYEREGRLFDHQGFLNSRLRTATLRNFSESQAVLICWLLRCYLINRQYQSAAHLVSKVAFPDNASNNDLARYMYYQGRIKALQLDYNSAAGYFLQAQRKAPQEGAIGFKQAVQKWVVVIGLLQGEIPDRSVFRQPIYRKCLAHYLDLSRGVRDGDVARFNHNLEQFKTQFEADDTLTLIVRLRQNVIKTAIKQISLAYSRIYIKDIAKKLYITNETETEYIVAKAIADGAIDAVITSDVRDGPRYMQSSETADIYRTSEPQAHFDTRIRYCLELHNQAVKALRYPPKKKIAVETIEQAREREQQELEFAKELADEDDDDF.

A PCI domain is found at 254 to 433 (ARYMYYQGRI…RDGPRYMQSS (180 aa)).

The protein belongs to the proteasome subunit S3 family. In terms of assembly, the 26S proteasome is composed of a core protease, known as the 20S proteasome, capped at one or both ends by the 19S regulatory complex (RC). The RC is composed of at least 18 different subunits in two subcomplexes, the base and the lid, which form the portions proximal and distal to the 20S proteolytic core, respectively.

Its function is as follows. Acts as a regulatory subunit of the 26 proteasome which is involved in the ATP-dependent degradation of ubiquitinated proteins. The sequence is that of 26S proteasome non-ATPase regulatory subunit 3 (rpn-3) from Caenorhabditis elegans.